The sequence spans 101 residues: SFYLYYASFFDIALFTVFIIDIIKFYILSGVIFYFFNIDCIMFFWRVFLFITMGFLFFIFTTWYFICFYMYICMFIWNLVIYFRYNLKYCLFFCMLFIIYI.

The next 3 membrane-spanning stretches (helical) occupy residues 12-32 (IALFTVFIIDIIKFYILSGVI), 48-68 (FLFITMGFLFFIFTTWYFICF), and 79-99 (LVIYFRYNLKYCLFFCMLFII).

This sequence belongs to the complex I subunit 5 family.

The protein localises to the mitochondrion inner membrane. The catalysed reaction is a ubiquinone + NADH + 5 H(+)(in) = a ubiquinol + NAD(+) + 4 H(+)(out). Its function is as follows. Core subunit of the mitochondrial membrane respiratory chain NADH dehydrogenase (Complex I) that is believed to belong to the minimal assembly required for catalysis. Complex I functions in the transfer of electrons from NADH to the respiratory chain. The immediate electron acceptor for the enzyme is believed to be ubiquinone. The polypeptide is NADH-ubiquinone oxidoreductase chain 5 (ND5) (Leishmania tarentolae (Sauroleishmania tarentolae)).